Reading from the N-terminus, the 421-residue chain is Trimethyllysine dioxygenase, mitochondrial (421 aa).

The N-terminal 15 residues, 1–15 (MWYHKLLHQQSRLRN), are a transit peptide targeting the mitochondrion. Lys179 and Lys236 each carry N6-acetyllysine. Residues His242, Asp244, and His389 each coordinate Fe cation.

It belongs to the gamma-BBH/TMLD family. In terms of assembly, homodimer. The cofactor is Fe(2+). It depends on L-ascorbate as a cofactor.

It localises to the mitochondrion matrix. The enzyme catalyses N(6),N(6),N(6)-trimethyl-L-lysine + 2-oxoglutarate + O2 = (3S)-3-hydroxy-N(6),N(6),N(6)-trimethyl-L-lysine + succinate + CO2. It functions in the pathway amine and polyamine biosynthesis; carnitine biosynthesis. Its function is as follows. Converts trimethyllysine (TML) into hydroxytrimethyllysine (HTML). The chain is Trimethyllysine dioxygenase, mitochondrial (Tmlhe) from Mus musculus (Mouse).